The primary structure comprises 1005 residues: DNA polymerase (1005 aa).

Belongs to the DNA polymerase type-B family. In terms of assembly, interacts with OPG148. Component of the Uracil-DNA glycosylase(UDG)-OPG148-polymerase complex; OPG148 and OPG116/UDG form a heterodimeric processivity factor that associates with OPG071 to form the processive polymerase holoenzyme.

It catalyses the reaction DNA(n) + a 2'-deoxyribonucleoside 5'-triphosphate = DNA(n+1) + diphosphate. Catalyzes DNA synthesis. Acquires processivity by associating with a heterodimeric processivity factor comprised of the viral OPG148 and OPG116 proteins, thereby forming the DNA polymerase holoenzyme. Displays 3'- to 5' exonuclease activity. Might participate in viral DNA recombination. Does not perform OPG116/D4synthesis across an abasic site. In Variola virus, this protein is DNA polymerase (OPG071).